The primary structure comprises 176 residues: MASHVDPLVVGRVIGDVVDLFVPTTAMSVRFGTKDLTNGCEIKPSVAAAPPAVQIAGRVNELFALVMTDPDAPSPSEPTMREWLHWLVVNIPGGTDPSQGDVVVPYMGPRPPVGIHRYVMVLFQQKARVAAPPPDEDAARARFSTRAFADRHDLGLPVAALYFNAQKEPANRRRRY.

This sequence belongs to the phosphatidylethanolamine-binding protein family.

In terms of biological role, may form complexes with phosphorylated ligands by interfering with kinases and their effectors. The polypeptide is Protein MOTHER of FT and TFL1 homolog 1 (Oryza sativa subsp. japonica (Rice)).